We begin with the raw amino-acid sequence, 476 residues long: Bifunctional protein HldE (476 aa).

A ribokinase region spans residues 1 to 319 (MKVSLPAFEK…EALALHHGES (319 aa)). 195-198 (NMSE) lines the ATP pocket. Residue Asp264 is part of the active site. The tract at residues 345–476 (MTNGCFDILH…AIIQNIMANQ (132 aa)) is cytidylyltransferase.

It in the N-terminal section; belongs to the carbohydrate kinase PfkB family. In the C-terminal section; belongs to the cytidylyltransferase family. Homodimer.

It catalyses the reaction D-glycero-beta-D-manno-heptose 7-phosphate + ATP = D-glycero-beta-D-manno-heptose 1,7-bisphosphate + ADP + H(+). It carries out the reaction D-glycero-beta-D-manno-heptose 1-phosphate + ATP + H(+) = ADP-D-glycero-beta-D-manno-heptose + diphosphate. The protein operates within nucleotide-sugar biosynthesis; ADP-L-glycero-beta-D-manno-heptose biosynthesis; ADP-L-glycero-beta-D-manno-heptose from D-glycero-beta-D-manno-heptose 7-phosphate: step 1/4. It functions in the pathway nucleotide-sugar biosynthesis; ADP-L-glycero-beta-D-manno-heptose biosynthesis; ADP-L-glycero-beta-D-manno-heptose from D-glycero-beta-D-manno-heptose 7-phosphate: step 3/4. Functionally, catalyzes the phosphorylation of D-glycero-D-manno-heptose 7-phosphate at the C-1 position to selectively form D-glycero-beta-D-manno-heptose-1,7-bisphosphate. Its function is as follows. Catalyzes the ADP transfer from ATP to D-glycero-beta-D-manno-heptose 1-phosphate, yielding ADP-D-glycero-beta-D-manno-heptose. The sequence is that of Bifunctional protein HldE from Shewanella putrefaciens (strain CN-32 / ATCC BAA-453).